The following is a 428-amino-acid chain: Enolase (428 aa).

Glutamine 165 provides a ligand contact to (2R)-2-phosphoglycerate. The Proton donor role is filled by glutamate 207. Residues aspartate 244, glutamate 285, and aspartate 312 each coordinate Mg(2+). (2R)-2-phosphoglycerate-binding residues include lysine 337, arginine 366, serine 367, and lysine 388. The Proton acceptor role is filled by lysine 337.

This sequence belongs to the enolase family. As to quaternary structure, component of the RNA degradosome, a multiprotein complex involved in RNA processing and mRNA degradation. Mg(2+) serves as cofactor.

Its subcellular location is the cytoplasm. The protein localises to the secreted. It localises to the cell surface. It carries out the reaction (2R)-2-phosphoglycerate = phosphoenolpyruvate + H2O. Its pathway is carbohydrate degradation; glycolysis; pyruvate from D-glyceraldehyde 3-phosphate: step 4/5. Its function is as follows. Catalyzes the reversible conversion of 2-phosphoglycerate (2-PG) into phosphoenolpyruvate (PEP). It is essential for the degradation of carbohydrates via glycolysis. The chain is Enolase from Coxiella burnetii (strain CbuK_Q154) (Coxiella burnetii (strain Q154)).